We begin with the raw amino-acid sequence, 623 residues long: Prothrombin (623 aa).

Residues 1 to 24 (MAHVRGLQLPGCLALAALCTLVHS) form the signal peptide. The propeptide occupies 25-43 (QHVFLAPQQALSLLQRVRR). The Gla domain occupies 44 to 90 (ANSVFLEEVRKGNLERECVEETCSYEEAFEALESSTATDVFWAKYTA). Glu50, Glu51, Glu58, Glu60, Glu63, Glu64, Glu69, Glu70, Glu73, and Glu76 each carry 4-carboxyglutamate. A disulfide bond links Cys61 and Cys66. 11 cysteine pairs are disulfide-bonded: Cys91–Cys104, Cys109–Cys187, Cys130–Cys170, Cys158–Cys182, Cys214–Cys292, Cys235–Cys275, Cys263–Cys287, Cys337–Cys483, Cys392–Cys408, Cys537–Cys551, and Cys565–Cys595. Kringle domains are found at residues 108–187 (NCAE…IPVC) and 213–292 (QCVP…LNYC). N-linked (GlcNAc...) asparagine glycans are attached at residues Asn122 and Asn144. The region spanning 365–619 (IVEGSDAEIG…LKKWIQKVID (255 aa)) is the Peptidase S1 domain. The Charge relay system role is filled by His407. Asn417 carries an N-linked (GlcNAc...) asparagine glycan. Asp463 (charge relay system) is an active-site residue. Positions 552–574 (AGYKPDEGKRGDACEGDSGGPFV) are high affinity receptor-binding region which also known as the TP508 peptide. The active-site Charge relay system is Ser569.

It belongs to the peptidase S1 family. As to quaternary structure, heterodimer (named alpha-thrombin) of a light and a heavy chain; disulfide-linked. Forms a heterodimer with SERPINA5. In plasma, interacts (via N-terminus) with alpha-1-microglobulin; this interaction does not prevent the activation of prothrombin to thrombin. The gamma-carboxyglutamyl residues, which bind calcium ions, result from the carboxylation of glutamyl residues by a microsomal enzyme, the vitamin K-dependent carboxylase. The modified residues are necessary for the calcium-dependent interaction with a negatively charged phospholipid surface, which is essential for the conversion of prothrombin to thrombin. In terms of processing, in the penultimate step of the coagulation cascade, prothrombin is converted to thrombin by the prothrombinase complex composed of factor Xa (F10), cofactor Va (F5), and phospholipids. This activation requires factor Xa-catalyzed sequential cleavage at 2 sites, Arg-315 and Arg-364, along 2 possible pathways. In the first pathway, the first cleavage occurs at Arg-315, leading to the formation of the inactive intermediate prethrombin-2. This pathway preferentially occurs on platelets and in the absence of cofactor Va. In the second pathway, the first cleavage occurs at Arg-364, which separates protease domain into 2 chains that remain connected through a disulfide bond and generates the active intermediate meizothrombin. The presence of cofactor Va directs activation along the meizothrombin pathway and greatly accelerates the rate of cleavage at Arg-364, but has a smaller effect on the cleavage of meizothrombin at Arg-315. Meizothrombin accumulates as an intermediate when prothrombinase is assembled on the membrane of red blood cells.

The catalysed reaction is Selective cleavage of Arg-|-Gly bonds in fibrinogen to form fibrin and release fibrinopeptides A and B.. Its activity is regulated as follows. Activity is promoted in the presence of negatively charged surfaces, such as polyphosphate and dextran sulfate. Inhibited by SERPINA5. Its function is as follows. Thrombin, which cleaves bonds after Arg and Lys, converts fibrinogen to fibrin and activates factors V, VII, VIII, XIII, and, in complex with thrombomodulin, protein C. Functions in blood homeostasis, inflammation and wound healing. Activates coagulation factor XI (F11); activation is promoted by the contact with negatively charged surfaces. Triggers the production of pro-inflammatory cytokines, such as MCP-1/CCL2 and IL8/CXCL8, in endothelial cells. The sequence is that of Prothrombin (F2) from Pongo abelii (Sumatran orangutan).